The chain runs to 270 residues: Ribosomal RNA small subunit methyltransferase J (270 aa).

Residues 126–127 (ER) and Asp-182 contribute to the S-adenosyl-L-methionine site.

Belongs to the methyltransferase superfamily. RsmJ family.

The protein resides in the cytoplasm. It catalyses the reaction guanosine(1516) in 16S rRNA + S-adenosyl-L-methionine = N(2)-methylguanosine(1516) in 16S rRNA + S-adenosyl-L-homocysteine + H(+). Functionally, specifically methylates the guanosine in position 1516 of 16S rRNA. The protein is Ribosomal RNA small subunit methyltransferase J of Acinetobacter baylyi (strain ATCC 33305 / BD413 / ADP1).